Here is a 314-residue protein sequence, read N- to C-terminus: E3 ubiquitin-protein ligase SINA-like 11 (314 aa).

The span at 1–12 (MEDSNSHPQNQT) shows a compositional bias: polar residues. The interval 1-31 (MEDSNSHPQNQTSKRKSSHPQKKQRMENETR) is disordered. The span at 13–23 (SKRKSSHPQKK) shows a compositional bias: basic residues. An RING-type; degenerate zinc finger spans residues 43–81 (CPVCFEPLTIPTFQCDDGHIVCNFCFAKVSNKCPGPGCD). Residues 95–280 (VLESAFVPCQ…PANEVQQVTI (186 aa)) are SBD. The SIAH-type zinc finger occupies 98 to 156 (SAFVPCQNTEFGCTKSVSYEKVSSHEKECNYSQCSCPNLECNYTGSYNIIYGHFMRRHL). Residues cysteine 103, cysteine 110, histidine 122, cysteine 126, cysteine 133, cysteine 138, histidine 150, and histidine 155 each coordinate Zn(2+).

It belongs to the SINA (Seven in absentia) family.

It catalyses the reaction S-ubiquitinyl-[E2 ubiquitin-conjugating enzyme]-L-cysteine + [acceptor protein]-L-lysine = [E2 ubiquitin-conjugating enzyme]-L-cysteine + N(6)-ubiquitinyl-[acceptor protein]-L-lysine.. The protein operates within protein modification; protein ubiquitination. Functionally, E3 ubiquitin-protein ligase that mediates ubiquitination and subsequent proteasomal degradation of target proteins. E3 ubiquitin ligases accept ubiquitin from an E2 ubiquitin-conjugating enzyme in the form of a thioester and then directly transfers the ubiquitin to targeted substrates. It probably triggers the ubiquitin-mediated degradation of different substrates. This Arabidopsis thaliana (Mouse-ear cress) protein is E3 ubiquitin-protein ligase SINA-like 11.